We begin with the raw amino-acid sequence, 698 residues long: Probable xyloglucan glycosyltransferase 2 (698 aa).

Helical transmembrane passes span 124 to 144 (GFLALSLLALAVELAAYWNGW) and 190 to 210 (ILLFVIQSMDRLVLCLGCFWI). Residue aspartate 272 is part of the active site. Residues aspartate 331 and aspartate 333 each contribute to the substrate site. Aspartate 425 is a catalytic residue. The next 4 membrane-spanning stretches (helical) occupy residues 503 to 523 (LILPFYSFTLFCVILPLTMFV), 528 to 548 (LPVWVICYVPVCMSFLNILPS), 653 to 668 (LALSLLLLTAATRSLL), and 673 to 693 (IHFYFLLFQGVSFLFVGLDLI).

The protein belongs to the glycosyltransferase 2 family. Plant cellulose synthase-like C subfamily.

It localises to the golgi apparatus membrane. Functionally, probable beta-1,4-glucan synthase rather involved in the synthesis of the xyloglucan backbone than cellulose. Seems to work simultaneously with xyloglucan 6-xylosyltransferase. Xyloglucan is a noncellulosic polysaccharides of plant cell wall and consists of a glucan backbone substituted by xylose, galactose and fucose. This Oryza sativa subsp. japonica (Rice) protein is Probable xyloglucan glycosyltransferase 2 (CSLC2).